The following is a 126-amino-acid chain: UPF0102 protein MXAN_3551 (126 aa).

The protein belongs to the UPF0102 family.

This Myxococcus xanthus (strain DK1622) protein is UPF0102 protein MXAN_3551.